Here is a 981-residue protein sequence, read N- to C-terminus: Alpha-mannosidase (981 aa).

Residues His23, Asp25, and Asp145 each coordinate Zn(2+). The active-site Nucleophile is Asp145. Asn312 is a glycosylation site (N-linked (GlcNAc...) asparagine). Position 386 (His386) interacts with Zn(2+). 3 cysteine pairs are disulfide-bonded: Cys422–Cys432, Cys442–Cys450, and Cys800–Cys807. The N-linked (GlcNAc...) asparagine glycan is linked to Asn446. The segment at 938–957 is disordered; sequence KKMKWSVEGDNEQEPQAVRG.

The protein belongs to the glycosyl hydrolase 38 family. Dimer of dimers of heavy and light subunits. Zn(2+) serves as cofactor. Produced as a precursor which is then proteolytically cleaved into a 66kD heavy subunit and a 44kD light subunit. Cleavage probably occurs in protein bodies/protein storage vacuoles.

It localises to the protein storage vacuole. It carries out the reaction Hydrolysis of terminal, non-reducing alpha-D-mannose residues in alpha-D-mannosides.. Its activity is regulated as follows. Inhibited by 2,3,4,6-tetra-O-acetyl-5-fluoro-beta-L-gulopyranosyl fluoride which acts as a slow substrate, doubling as a competitive inhibitor as it forms a high steady state concentration of glycosyl-enzyme intermediate that blocks the active site. Inhibited by 2,3,4,6-tetra-O-acetyl-5-fluoro-alpha-D-mannopyranosyl fluoride which also acts as a slow substrate but no intermediates accumulate. Inhibited by EDTA. Inhibited by metal ion Cu(2+). Inhibited by metal ions Fe(2+), Cd(2+) and Co(2+). Inhibited by metal ions Ag(+) and Hg(2+). Competitively inhibited by mannono-1-4-lactone and mannono-1-5-lactone. Inhibited by swainsonine but not by 1-desoxymannojirimycin. Inhibited by pyrrolidine-3,4-diol derivatives. Functionally, liberates mannose from p-nitrophenyl-alpha-D-mannoside. Liberates mannose from further alpha-D-mannosides including methyl-, benzyl-alpha-D-mannoside, 1-6-linked di-, tri- and tetrasaccharides of alpha-D-mannose and mannosyl-rhamnose. Liberates mannose from various glycoproteins like ovalbumin and ovomucoid. Does not hydrolyze beta-D-mannosides. Has glycosyltransferase activity, forming disaccharides from mannose and lyxose but not from glucose, galactose, ribose, xylose or arabinose. The polypeptide is Alpha-mannosidase (Canavalia ensiformis (Jack bean)).